We begin with the raw amino-acid sequence, 130 residues long: Small ribosomal subunit protein uS9 (130 aa).

The protein belongs to the universal ribosomal protein uS9 family.

This Shewanella loihica (strain ATCC BAA-1088 / PV-4) protein is Small ribosomal subunit protein uS9.